Here is a 463-residue protein sequence, read N- to C-terminus: MGYPGQRPVIPPQSHRDDRETLVSEHKHKGKTCRQSAAVFNVVNSIIGSGIIGLPYSMKQAGFPLGILLLFWVSYVTDFSLILLIKGAALSGTDTYQSLVNRTFGFPGYLLLSVLQFLYPFIAMISYNIITGDTLSKVFQRIPGVDPENLLIGRHLIIVLSTVVFTLPLSLYRDIAKLGKISLISTVLTTLILGIVVARGVSLGPHIPKTEDAWIFAKPNAVQAVGVMSFAFICHHNCFLVYGSLEEPTVAKWSHIIHVSTLISVFISILFATCGYLTFTGYTQGDLFENYCRNDDLVTFGRFCYGVTVILTYPIECFVTREVIANVFFGGNLSSVCHIIVTVVIITVATLVSLLIDCLGIVLELNGVLCAAPLIFIIPSACYLKLSEEPRTHSDKIMSCVMLPIGAVVMAVGFVMAVTSPQDCSHGQEMFYCSPDNFSLTNISISHFQLTTQLSILNVSIFQ.

A disordered region spans residues 1–27 (MGYPGQRPVIPPQSHRDDRETLVSEHK). A compositionally biased stretch (basic and acidic residues) spans 14–25 (SHRDDRETLVSE). A run of 11 helical transmembrane segments spans residues 38–58 (AVFNVVNSIIGSGIIGLPYSM), 65–85 (LGILLLFWVSYVTDFSLILLI), 105–125 (GFPGYLLLSVLQFLYPFIAMI), 150–170 (LLIGRHLIIVLSTVVFTLPLS), 178–198 (LGKISLISTVLTTLILGIVVA), 225–245 (VGVMSFAFICHHNCFLVYGSL), 256–276 (IIHVSTLISVFISILFATCGY), 298–320 (VTFGRFCYGVTVILTYPIECFVT), 336–356 (VCHIIVTVVIITVATLVSLLI), 358–378 (CLGIVLELNGVLCAAPLIFII), and 397–417 (IMSCVMLPIGAVVMAVGFVMA). N-linked (GlcNAc...) asparagine glycans are attached at residues Asn-437, Asn-442, and Asn-458.

Belongs to the amino acid/polyamine transporter 2 family.

The protein localises to the membrane. Functionally, putative sodium-dependent amino acid/proton antiporter. The protein is Putative sodium-coupled neutral amino acid transporter 11 (SLC38A11) of Bos taurus (Bovine).